We begin with the raw amino-acid sequence, 702 residues long: Phosphoribosylformylglycinamidine synthase subunit PurL (702 aa).

The active site involves His-36. 2 residues coordinate ATP: Tyr-39 and Lys-80. Residue Glu-82 coordinates Mg(2+). Residues 83-86 (SHNH) and Arg-105 contribute to the substrate site. The active-site Proton acceptor is the His-84. Position 106 (Asp-106) interacts with Mg(2+). Gln-225 provides a ligand contact to substrate. Residue Asp-251 participates in Mg(2+) binding. 293-295 (ETQ) contributes to the substrate binding site. The ATP site is built by Asp-468 and Gly-505. A substrate-binding site is contributed by Ser-508.

This sequence belongs to the FGAMS family. Monomer. Part of the FGAM synthase complex composed of 1 PurL, 1 PurQ and 2 PurS subunits.

Its subcellular location is the cytoplasm. It carries out the reaction N(2)-formyl-N(1)-(5-phospho-beta-D-ribosyl)glycinamide + L-glutamine + ATP + H2O = 2-formamido-N(1)-(5-O-phospho-beta-D-ribosyl)acetamidine + L-glutamate + ADP + phosphate + H(+). Its pathway is purine metabolism; IMP biosynthesis via de novo pathway; 5-amino-1-(5-phospho-D-ribosyl)imidazole from N(2)-formyl-N(1)-(5-phospho-D-ribosyl)glycinamide: step 1/2. Part of the phosphoribosylformylglycinamidine synthase complex involved in the purines biosynthetic pathway. Catalyzes the ATP-dependent conversion of formylglycinamide ribonucleotide (FGAR) and glutamine to yield formylglycinamidine ribonucleotide (FGAM) and glutamate. The FGAM synthase complex is composed of three subunits. PurQ produces an ammonia molecule by converting glutamine to glutamate. PurL transfers the ammonia molecule to FGAR to form FGAM in an ATP-dependent manner. PurS interacts with PurQ and PurL and is thought to assist in the transfer of the ammonia molecule from PurQ to PurL. In Metallosphaera sedula (strain ATCC 51363 / DSM 5348 / JCM 9185 / NBRC 15509 / TH2), this protein is Phosphoribosylformylglycinamidine synthase subunit PurL.